The sequence spans 75 residues: Small ribosomal subunit protein bS18 (75 aa).

It belongs to the bacterial ribosomal protein bS18 family. Part of the 30S ribosomal subunit. Forms a tight heterodimer with protein bS6.

Its function is as follows. Binds as a heterodimer with protein bS6 to the central domain of the 16S rRNA, where it helps stabilize the platform of the 30S subunit. The polypeptide is Small ribosomal subunit protein bS18 (Buchnera aphidicola subsp. Cinara cedri (strain Cc)).